Reading from the N-terminus, the 95-residue chain is Aspartyl/glutamyl-tRNA(Asn/Gln) amidotransferase subunit C (95 aa).

Belongs to the GatC family. In terms of assembly, heterotrimer of A, B and C subunits.

The catalysed reaction is L-glutamyl-tRNA(Gln) + L-glutamine + ATP + H2O = L-glutaminyl-tRNA(Gln) + L-glutamate + ADP + phosphate + H(+). It catalyses the reaction L-aspartyl-tRNA(Asn) + L-glutamine + ATP + H2O = L-asparaginyl-tRNA(Asn) + L-glutamate + ADP + phosphate + 2 H(+). Its function is as follows. Allows the formation of correctly charged Asn-tRNA(Asn) or Gln-tRNA(Gln) through the transamidation of misacylated Asp-tRNA(Asn) or Glu-tRNA(Gln) in organisms which lack either or both of asparaginyl-tRNA or glutaminyl-tRNA synthetases. The reaction takes place in the presence of glutamine and ATP through an activated phospho-Asp-tRNA(Asn) or phospho-Glu-tRNA(Gln). The polypeptide is Aspartyl/glutamyl-tRNA(Asn/Gln) amidotransferase subunit C (Methylobacterium radiotolerans (strain ATCC 27329 / DSM 1819 / JCM 2831 / NBRC 15690 / NCIMB 10815 / 0-1)).